We begin with the raw amino-acid sequence, 181 residues long: MIQDSEFFRMEGVPITKEEIRAVSIGKLNLDPEDIVLDIGCGSGGMSVEIAKRSKFVYSIDNSEDAKNTTSINLKKFKIENCEVFHGDAKDLISKFDFNKVFIGGTQNIEQTLEILKEKKIEKVVANTIVLENSVKIITKFEELGYNVDFVNLSVSYGKKISSGHIMLSKNPITIITATLK.

S-adenosyl-L-methionine contacts are provided by residues T16, 40–44 (GCGSG), D61, and A89.

Belongs to the methyltransferase superfamily. Archaeal-type CbiT family.

It carries out the reaction Co-precorrin-6B + S-adenosyl-L-methionine = Co-precorrin-7 + S-adenosyl-L-homocysteine + CO2. It functions in the pathway cofactor biosynthesis; adenosylcobalamin biosynthesis; cob(II)yrinate a,c-diamide from sirohydrochlorin (anaerobic route): step 8/10. Catalyzes the methylation of C-15 in cobalt-precorrin-6B followed by the decarboxylation of C-12 to form cobalt-precorrin-7. This is Probable cobalt-precorrin-6B C(15)-methyltransferase (decarboxylating) from Methanococcus maripaludis (strain C5 / ATCC BAA-1333).